The primary structure comprises 187 residues: 2-oxoglutarate synthase subunit KorC (187 aa).

Heterotetramer of the KorA, KorB, KorC and KorD subunits.

It carries out the reaction 2 oxidized [2Fe-2S]-[ferredoxin] + 2-oxoglutarate + CoA = succinyl-CoA + 2 reduced [2Fe-2S]-[ferredoxin] + CO2 + H(+). The protein is 2-oxoglutarate synthase subunit KorC (korC) of Methanocaldococcus jannaschii (strain ATCC 43067 / DSM 2661 / JAL-1 / JCM 10045 / NBRC 100440) (Methanococcus jannaschii).